The following is a 152-amino-acid chain: Cytochrome c oxidase subunit 5A, mitochondrial (152 aa).

Residues 1–43 constitute a mitochondrion transit peptide; the sequence is MLGTALRRCAVAAAAASRAGPRGLLHPAPAPGPAAAIQSIRCY. Residues 2-22 carry the SIFI-degron motif; the sequence is LGTALRRCAVAAAAASRAGPR. K89 and K115 each carry N6-acetyllysine. A Phosphothreonine modification is found at T143.

Belongs to the cytochrome c oxidase subunit 5A family. Component of the cytochrome c oxidase (complex IV, CIV), a multisubunit enzyme composed of 14 subunits. The complex is composed of a catalytic core of 3 subunits MT-CO1, MT-CO2 and MT-CO3, encoded in the mitochondrial DNA, and 11 supernumerary subunits COX4I, COX5A, COX5B, COX6A, COX6B, COX6C, COX7A, COX7B, COX7C, COX8 and NDUFA4, which are encoded in the nuclear genome. The complex exists as a monomer or a dimer and forms supercomplexes (SCs) in the inner mitochondrial membrane with NADH-ubiquinone oxidoreductase (complex I, CI) and ubiquinol-cytochrome c oxidoreductase (cytochrome b-c1 complex, complex III, CIII), resulting in different assemblies (supercomplex SCI(1)III(2)IV(1) and megacomplex MCI(2)III(2)IV(2)). Interacts with AFG1L. Interacts with RAB5IF. In response to mitochondrial stress, the precursor protein is ubiquitinated by the SIFI complex in the cytoplasm before mitochondrial import, leading to its degradation. Within the SIFI complex, UBR4 initiates ubiquitin chain that are further elongated or branched by KCMF1.

It is found in the mitochondrion inner membrane. It participates in energy metabolism; oxidative phosphorylation. In terms of biological role, component of the cytochrome c oxidase, the last enzyme in the mitochondrial electron transport chain which drives oxidative phosphorylation. The respiratory chain contains 3 multisubunit complexes succinate dehydrogenase (complex II, CII), ubiquinol-cytochrome c oxidoreductase (cytochrome b-c1 complex, complex III, CIII) and cytochrome c oxidase (complex IV, CIV), that cooperate to transfer electrons derived from NADH and succinate to molecular oxygen, creating an electrochemical gradient over the inner membrane that drives transmembrane transport and the ATP synthase. Cytochrome c oxidase is the component of the respiratory chain that catalyzes the reduction of oxygen to water. Electrons originating from reduced cytochrome c in the intermembrane space (IMS) are transferred via the dinuclear copper A center (CU(A)) of subunit 2 and heme A of subunit 1 to the active site in subunit 1, a binuclear center (BNC) formed by heme A3 and copper B (CU(B)). The BNC reduces molecular oxygen to 2 water molecules using 4 electrons from cytochrome c in the IMS and 4 protons from the mitochondrial matrix. The polypeptide is Cytochrome c oxidase subunit 5A, mitochondrial (COX5A) (Eulemur fulvus fulvus (Brown lemur)).